The following is an 82-amino-acid chain: Small ribosomal subunit protein bS16 (82 aa).

This sequence belongs to the bacterial ribosomal protein bS16 family.

The polypeptide is Small ribosomal subunit protein bS16 (Aliivibrio fischeri (strain ATCC 700601 / ES114) (Vibrio fischeri)).